The sequence spans 189 residues: Putative ankyrin repeat protein L38 (189 aa).

An ANK repeat occupies 108–137; sequence YGKTPLITAIKSGNCIMVKKLIDYGADFNK.

The sequence is that of Putative ankyrin repeat protein L38 from Acanthamoeba polyphaga mimivirus (APMV).